Here is a 253-residue protein sequence, read N- to C-terminus: Probable transcriptional regulatory protein Tery_2125 (253 aa).

The protein belongs to the TACO1 family.

It is found in the cytoplasm. The protein is Probable transcriptional regulatory protein Tery_2125 of Trichodesmium erythraeum (strain IMS101).